Reading from the N-terminus, the 328-residue chain is Cell division protein ZipA (328 aa).

The Periplasmic portion of the chain corresponds to 1–4 (MDLN). Residues 5-25 (TILIIVGIVALVALIVHGLWS) form a helical membrane-spanning segment. The Cytoplasmic segment spans residues 26–328 (NRREKSKYFD…NAEQAYLARV (303 aa)). Residues 44 to 82 (SLTSRSHTQEEMVQPNNISPNTYVENGHTPIPQPTTEKL) are disordered. Positions 57–67 (QPNNISPNTYV) are enriched in polar residues.

This sequence belongs to the ZipA family. As to quaternary structure, interacts with FtsZ via their C-terminal domains.

It is found in the cell inner membrane. Functionally, essential cell division protein that stabilizes the FtsZ protofilaments by cross-linking them and that serves as a cytoplasmic membrane anchor for the Z ring. Also required for the recruitment to the septal ring of downstream cell division proteins. This is Cell division protein ZipA from Haemophilus influenzae (strain ATCC 51907 / DSM 11121 / KW20 / Rd).